Consider the following 334-residue polypeptide: Inositol 2-dehydrogenase (334 aa).

The protein belongs to the Gfo/Idh/MocA family. As to quaternary structure, homotetramer.

It catalyses the reaction myo-inositol + NAD(+) = scyllo-inosose + NADH + H(+). Its function is as follows. Involved in the oxidation of myo-inositol (MI) to 2-keto-myo-inositol (2KMI or 2-inosose). The polypeptide is Inositol 2-dehydrogenase (Cereibacter sphaeroides (strain ATCC 17023 / DSM 158 / JCM 6121 / CCUG 31486 / LMG 2827 / NBRC 12203 / NCIMB 8253 / ATH 2.4.1.) (Rhodobacter sphaeroides)).